The sequence spans 772 residues: Lon protease (772 aa).

The Lon N-terminal domain occupies 6–200 (YPTLPLKNTV…LMHRYLNHEV (195 aa)). 352 to 359 (GPPGVGKT) contributes to the ATP binding site. The region spanning 588-769 (QLAPGVAAGL…EEVLAEAIPD (182 aa)) is the Lon proteolytic domain. Catalysis depends on residues S675 and K718.

This sequence belongs to the peptidase S16 family. In terms of assembly, homohexamer. Organized in a ring with a central cavity.

The protein resides in the cytoplasm. It catalyses the reaction Hydrolysis of proteins in presence of ATP.. Functionally, ATP-dependent serine protease that mediates the selective degradation of mutant and abnormal proteins as well as certain short-lived regulatory proteins. Required for cellular homeostasis and for survival from DNA damage and developmental changes induced by stress. Degrades polypeptides processively to yield small peptide fragments that are 5 to 10 amino acids long. Binds to DNA in a double-stranded, site-specific manner. The protein is Lon protease of Nitrosococcus oceani (strain ATCC 19707 / BCRC 17464 / JCM 30415 / NCIMB 11848 / C-107).